Here is a 119-residue protein sequence, read N- to C-terminus: Large ribosomal subunit protein uL18 (119 aa).

It belongs to the universal ribosomal protein uL18 family. As to quaternary structure, part of the 50S ribosomal subunit; part of the 5S rRNA/L5/L18/L25 subcomplex. Contacts the 5S and 23S rRNAs.

Its function is as follows. This is one of the proteins that bind and probably mediate the attachment of the 5S RNA into the large ribosomal subunit, where it forms part of the central protuberance. The sequence is that of Large ribosomal subunit protein uL18 from Cupriavidus necator (strain ATCC 17699 / DSM 428 / KCTC 22496 / NCIMB 10442 / H16 / Stanier 337) (Ralstonia eutropha).